The sequence spans 98 residues: MKKYFVLLLAVLLVGGLFAVKITMTSGGVGKELEVLKKQLEMFHQQYPDIEVEIIPMPDSSTERHDLYVTYFAAGETDPDVLMLDVIWPAEFAPFLED.

This is an uncharacterized protein from Thermotoga maritima (strain ATCC 43589 / DSM 3109 / JCM 10099 / NBRC 100826 / MSB8).